The chain runs to 125 residues: Multifunctional methyltransferase subunit TRM112-like protein (125 aa).

Positions 2-119 constitute a TRM112 domain; the sequence is KLLTHNLLSS…SRGIPNMLLN (118 aa).

It belongs to the TRM112 family. As to quaternary structure, part of the heterodimeric BUD23-TRM112 methyltransferase complex; this heterodimerization is necessary for the metabolic stability and activity of the catalytic subunit BUD23. Part of the heterodimeric N6AMT1-TRM112 methyltransferase complex; this heterodimerization is necessary for S-adenosyl-L-methionine-binding to N6AMT1/HEMK2. Part of the heterodimeric ALKBH8-TRM112 methyltransferase complex. Part of the heterodimeric METTL5-TRM112 methyltransferase complex; this heterodimerization is necessary for the stability of the catalytic subunit METTL5. Part of the heterodimeric THUMPD3-TRM112 methyltransferase complex; this complex forms an active tRNA methyltransferase, where TRMT112 acts as an activator of the catalytic subunit THUMPD3. Part of the heterodimeric THUMPD2-TRM112 methyltransferase complex; this complex forms an active tRNA methyltransferase, where TRMT112 acts as an activator of the catalytic subunit THUMPD2. Part of the heterodimeric TRMT11-TRM112 methyltransferase complex; this complex forms an active tRNA methyltransferase, where TRMT112 acts as an activator of the catalytic subunit TRMT11. Abundantly expressed in the testis, also expressed in the brain, heart, kidney, liver, lung, muscle and spleen.

It is found in the nucleus. The protein localises to the nucleoplasm. Its subcellular location is the cytoplasm. The protein resides in the perinuclear region. Its function is as follows. Acts as an activator of both rRNA/tRNA and protein methyltransferases. Together with methyltransferase BUD23, methylates the N(7) position of a guanine in 18S rRNA. The heterodimer with HEMK2/N6AMT1 catalyzes N5-methylation of ETF1 on 'Gln-185', using S-adenosyl L-methionine as methyl donor. The heterodimer with ALKBH8 catalyzes the methylation of 5-carboxymethyl uridine to 5-methylcarboxymethyl uridine at the wobble position of the anticodon loop in target tRNA species. Together with methyltransferase THUMPD3, catalyzes the formation of N(2)-methylguanosine at position 6 in a broad range of tRNA substrates and at position 7 of tRNA(Trp). Involved in the pre-rRNA processing steps leading to small-subunit rRNA production. Together with methyltransferase METTL5, specifically methylates the 6th position of adenine in position 1832 of 18S rRNA. This is Multifunctional methyltransferase subunit TRM112-like protein (Trmt112) from Mus musculus (Mouse).